A 657-amino-acid polypeptide reads, in one-letter code: WD repeat-containing protein 70 (657 aa).

2 disordered regions span residues 1–21 (MEHS…DPQL) and 43–172 (FEQT…PVQR). A compositionally biased stretch (basic and acidic residues) spans 45-78 (QTRRTAVERSRKTLEAREKEEEMNREKELRKQIE). A compositionally biased stretch (low complexity) spans 82–105 (PAPSSSSAARERSQSSCRDTSSSD). Composition is skewed to acidic residues over residues 106–119 (SESD…DDEL) and 150–168 (EEGE…EEDN). WD repeat units follow at residues 183-222 (HGTK…ASFK), 230-271 (CECH…ECIK), 284-324 (GHTA…KQKS), 333-372 (GKKV…HPKF), 379-418 (DPGT…KPLF), 424-469 (PTLF…RVYE), and 472-511 (ITDA…QRGA). A Glycyl lysine isopeptide (Lys-Gly) (interchain with G-Cter in SUMO2) cross-link involves residue lysine 299. The residue at position 455 (lysine 455) is an N6-acetyllysine. Positions 543-568 (REPRQRSTRKQLEKDRLDPLKSHKPE) are enriched in basic and acidic residues. The interval 543–584 (REPRQRSTRKQLEKDRLDPLKSHKPEPPVAGPGRGGRVGTHG) is disordered. Residues 574–584 (PGRGGRVGTHG) show a composition bias toward gly residues. Threonine 582 bears the Phosphothreonine mark. Residues lysine 593 and lysine 599 each participate in a glycyl lysine isopeptide (Lys-Gly) (interchain with G-Cter in SUMO2) cross-link. Phosphoserine occurs at positions 624 and 641. The interval 634 to 657 (TMFAQVESDDEESKNEPEWKKRKI) is disordered. Basic and acidic residues predominate over residues 647–657 (KNEPEWKKRKI).

It belongs to the WD repeat GAD-1 family.

This Mus musculus (Mouse) protein is WD repeat-containing protein 70 (Wdr70).